Here is a 400-residue protein sequence, read N- to C-terminus: Subtilisin-like protease 11 (400 aa).

The first 19 residues, 1–19 (MGLFKVIFTAVAALSAVDA), serve as a signal peptide directing secretion. A propeptide spanning residues 20–117 (AELLSSAKSK…VEHDRHVYIS (98 aa)) is cleaved from the precursor. The Inhibitor I9 domain occupies 35–116 (SYLVVMKDSV…FVEHDRHVYI (82 aa)). The Peptidase S8 domain maps to 127 to 400 (SWGLGRVSHR…NKLLYNGSGK (274 aa)). N-linked (GlcNAc...) asparagine glycosylation is present at asparagine 138. Catalysis depends on aspartate 159, which acts as the Charge relay system. Asparagine 181 carries N-linked (GlcNAc...) asparagine glycosylation. The active-site Charge relay system is histidine 191. 2 N-linked (GlcNAc...) asparagine glycosylation sites follow: asparagine 252 and asparagine 337. Residue serine 346 is the Charge relay system of the active site. N-linked (GlcNAc...) asparagine glycans are attached at residues asparagine 388 and asparagine 396.

Belongs to the peptidase S8 family.

It localises to the secreted. In terms of biological role, secreted subtilisin-like serine protease with keratinolytic activity that contributes to pathogenicity. The protein is Subtilisin-like protease 11 (SUB11) of Arthroderma benhamiae (strain ATCC MYA-4681 / CBS 112371) (Trichophyton mentagrophytes).